The following is a 448-amino-acid chain: Cysteine--tRNA ligase (448 aa).

A Zn(2+)-binding site is contributed by C29. Positions 31-41 (PTVYDTAHIGN) match the 'HIGH' region motif. A compositionally biased stretch (basic and acidic residues) spans 79–91 (ATTGADRGADQAH). Residues 79–106 (ATTGADRGADQAHRGPLPRRHGPLNAAP) form a disordered region. 2 residues coordinate Zn(2+): C206 and E235. Residues 265-269 (RMSKS) carry the 'KMSKS' region motif. ATP is bound at residue K268.

Belongs to the class-I aminoacyl-tRNA synthetase family. Monomer. The cofactor is Zn(2+).

The protein resides in the cytoplasm. The catalysed reaction is tRNA(Cys) + L-cysteine + ATP = L-cysteinyl-tRNA(Cys) + AMP + diphosphate. In Azospirillum brasilense, this protein is Cysteine--tRNA ligase (cysS).